We begin with the raw amino-acid sequence, 353 residues long: Paraneoplastic antigen Ma1 homolog (353 aa).

It belongs to the PNMA family. As to expression, testis and brain specific.

Its subcellular location is the nucleus. The protein resides in the nucleolus. This Rattus norvegicus (Rat) protein is Paraneoplastic antigen Ma1 homolog (Pnma1).